Here is a 491-residue protein sequence, read N- to C-terminus: Serine/threonine-protein kinase 3 (491 aa).

Met-1 is subject to N-acetylmethionine. Position 15 is a phosphoserine; by PLK1 (Ser-15). A Protein kinase domain is found at 27–278 (FDVLEKLGEG…ATQLLQHPFI (252 aa)). ATP contacts are provided by residues 33 to 41 (LGEGSYGSV) and Lys-56. At Thr-117 the chain carries Phosphothreonine; by PKB/AKT1. Asp-146 acts as the Proton acceptor in catalysis. Positions 151 and 164 each coordinate Mg(2+). Phosphothreonine; by autocatalysis occurs at positions 174 and 180. Positions 287-328 (LRDLITEAMEIKAKRHEEQQRELEEEEENSDEDELDSHTMVK) form a coiled coil. Residues 301–327 (RHEEQQRELEEEEENSDEDELDSHTMV) form a disordered region. Residues 309–321 (LEEEEENSDEDEL) show a composition bias toward acidic residues. The residue at position 316 (Ser-316) is a Phosphoserine. Residues Thr-336 and Thr-378 each carry the phosphothreonine; by autocatalysis modification. Residues 370–392 (EDEEEEDGTMKRNATSPQVQRPS) form a disordered region. Residues 381-390 (RNATSPQVQR) show a composition bias toward polar residues. Thr-384 bears the Phosphothreonine; by PKB/AKT1 mark. Residues Ser-385 and Ser-444 each carry the phosphoserine modification. The 48-residue stretch at 437-484 (FDFLKNLSLEELQMRLKALDPMMEREIEELRQRYTAKRQPILDAMDAK) folds into the SARAH domain. The stretch at 442-475 (NLSLEELQMRLKALDPMMEREIEELRQRYTAKRQ) forms a coiled coil.

This sequence belongs to the protein kinase superfamily. STE Ser/Thr protein kinase family. STE20 subfamily. Homodimer; mediated via the coiled-coil region. Interacts with NORE1, which inhibits autoactivation. Interacts with and stabilizes SAV1. Interacts with RAF1, which prevents dimerization and phosphorylation. Interacts with RASSF1. Interacts (via SARAH domain) with isoform 1 of NEK2. Interacts with ESR1 only in the presence of SAV1. Interacts with PKB/AKT1. Forms a tripartite complex with MOBKL1B and STK38. Interacts with RASSF2 (via SARAH domain). Interacts with DLG5 (via PDZ domain 3). Interacts with LATS1; this interaction is inhibited in the presence of DLG5. Interacts with MARK3 in the presence of DLG5. Interacts with RASSF5; this interaction inhibits STK3 autoactivation through heterodimerization. Interacts (when phosphorylated) with SLMAP (via FHA domain); the interaction associates STK3 with the STRIPAK complex. Requires Mg(2+) as cofactor. Autophosphorylated on two residues Thr-174 and Thr-180, leading to activation. Phosphorylation at Thr-117 and Thr-384 by PKB/AKT1, leads to inhibition of its: cleavage, kinase activity, autophosphorylation at Thr-180, binding to RASSF1 and nuclear translocation, and increase in its binding to RAF1. Phosphorylated at Ser-15 by PLK1, leading to activation. When autophosphorylated at Thr-180, recruits STRIPAK complex and promotes PP2A-mediated dephosphorylation and inactivation of STK3. Post-translationally, proteolytically cleaved by caspase-3 during apoptosis. Proteolytic cleavage results in kinase activation and nuclear translocation of the truncated form (MST1/N). In terms of processing, ubiquitinated by TRIM69; leading to its redistribution to the perinuclear cytoskeleton, where it is phosphorylated by PLK1 and subsequently activated. Expressed at high levels in adult kidney, skeletal and placenta tissues and at very low levels in adult heart, lung and brain tissues.

It is found in the cytoplasm. The protein localises to the nucleus. Its subcellular location is the cytoskeleton. It localises to the microtubule organizing center. The protein resides in the centrosome. The catalysed reaction is L-seryl-[protein] + ATP = O-phospho-L-seryl-[protein] + ADP + H(+). It carries out the reaction L-threonyl-[protein] + ATP = O-phospho-L-threonyl-[protein] + ADP + H(+). With respect to regulation, inhibited by the C-terminal non-catalytic region. Activated by caspase-cleavage. Full activation also requires homodimerization and autophosphorylation of Thr-180, which are inhibited by the proto-oncogene product RAF1. Activated by RASSF1 which acts by preventing its dephosphorylation. When autophosphorylated at Thr-180, recruits STRIPAK complex and promotes PP2A-mediated dephosphorylation and inactivation of STK3. Functionally, stress-activated, pro-apoptotic kinase which, following caspase-cleavage, enters the nucleus and induces chromatin condensation followed by internucleosomal DNA fragmentation. Key component of the Hippo signaling pathway which plays a pivotal role in organ size control and tumor suppression by restricting proliferation and promoting apoptosis. The core of this pathway is composed of a kinase cascade wherein STK3/MST2 and STK4/MST1, in complex with its regulatory protein SAV1, phosphorylates and activates LATS1/2 in complex with its regulatory protein MOB1, which in turn phosphorylates and inactivates YAP1 oncoprotein and WWTR1/TAZ. Phosphorylation of YAP1 by LATS2 inhibits its translocation into the nucleus to regulate cellular genes important for cell proliferation, cell death, and cell migration. STK3/MST2 and STK4/MST1 are required to repress proliferation of mature hepatocytes, to prevent activation of facultative adult liver stem cells (oval cells), and to inhibit tumor formation. Phosphorylates NKX2-1. Phosphorylates NEK2 and plays a role in centrosome disjunction by regulating the localization of NEK2 to centrosome, and its ability to phosphorylate CROCC and CEP250. In conjunction with SAV1, activates the transcriptional activity of ESR1 through the modulation of its phosphorylation. Positively regulates RAF1 activation via suppression of the inhibitory phosphorylation of RAF1 on 'Ser-259'. Phosphorylates MOBKL1A and RASSF2. Phosphorylates MOBKL1B on 'Thr-74'. Acts cooperatively with MOBKL1B to activate STK38. This chain is Serine/threonine-protein kinase 3, found in Homo sapiens (Human).